Here is a 311-residue protein sequence, read N- to C-terminus: Methionyl-tRNA formyltransferase (311 aa).

110–113 is a binding site for (6S)-5,6,7,8-tetrahydrofolate; sequence SLLP.

This sequence belongs to the Fmt family.

It catalyses the reaction L-methionyl-tRNA(fMet) + (6R)-10-formyltetrahydrofolate = N-formyl-L-methionyl-tRNA(fMet) + (6S)-5,6,7,8-tetrahydrofolate + H(+). Its function is as follows. Attaches a formyl group to the free amino group of methionyl-tRNA(fMet). The formyl group appears to play a dual role in the initiator identity of N-formylmethionyl-tRNA by promoting its recognition by IF2 and preventing the misappropriation of this tRNA by the elongation apparatus. This Streptococcus pneumoniae serotype 2 (strain D39 / NCTC 7466) protein is Methionyl-tRNA formyltransferase.